A 1693-amino-acid polypeptide reads, in one-letter code: 1-phosphatidylinositol 4,5-bisphosphate phosphodiesterase eta-1 (1693 aa).

Positions 20 to 128 constitute a PH domain; that stretch reads SVMQSGTQMI…WITGLKYLMA (109 aa). EF-hand domains are found at residues 142-177, 178-214, and 226-246; these read THDQ…LNVN, LPRR…MSLR, and DKKD…EQKM. The Ca(2+) site is built by Asp-155, Asn-157, Asp-159, and Glu-166. The PI-PLC X-box domain occupies 299–444; that stretch reads QDMDQPLCNY…LKGKILVKGK (146 aa). The active site involves His-314. Positions 315, 344, and 346 each coordinate Ca(2+). The active site involves His-358. Glu-393 contributes to the Ca(2+) binding site. 2 residues coordinate substrate: Lys-442 and Lys-444. Residues 526-585 are disordered; it reads LNAHLKQSPDVKESGKKSHGRSLMTNFGKHKKTTKSRSKSYSTDDEEDTQQSTGKEGGQL. A compositionally biased stretch (basic and acidic residues) spans 532–541; sequence QSPDVKESGK. A compositionally biased stretch (basic residues) spans 553-563; it reads GKHKKTTKSRS. A PI-PLC Y-box domain is found at 601–714; the sequence is LSDLVVYTNS…GYVLKPQQMC (114 aa). Residues Ser-627 and Arg-654 each coordinate substrate. The C2 domain occupies 715–843; it reads KGTFNPFSGD…PGYRHVYLEG (129 aa). The Ca(2+) site is built by Ile-758, Asp-760, Asp-784, Asp-813, His-814, and Asp-815. Residues 992-1005 are compositionally biased toward basic and acidic residues; the sequence is IEGKENSLAEDKDG. 4 disordered regions span residues 992 to 1014, 1052 to 1089, 1300 to 1329, and 1578 to 1613; these read IEGK…ASIK, TGEQ…PKQH, LESN…ETLK, and LSSR…GAGV. Residues 1065-1086 are compositionally biased toward polar residues; the sequence is RTTSNATSNCQENPCPSKSLSP. The span at 1592–1601 shows a compositional bias: basic and acidic residues; that stretch reads RAKEKQEANK.

Requires Ca(2+) as cofactor. As to expression, expressed in brain and to a lower extent in lung. In brain, it is found in cerebrum, cerebellum and spinal cord. In embryo expressed in the notochord, developing spinal cord (in a ventral to dorsal gradient), dorsal root ganglia, cerebellum and dermatomyosome.

The protein localises to the cytoplasm. The protein resides in the membrane. The enzyme catalyses a 1,2-diacyl-sn-glycero-3-phospho-(1D-myo-inositol-4,5-bisphosphate) + H2O = 1D-myo-inositol 1,4,5-trisphosphate + a 1,2-diacyl-sn-glycerol + H(+). The production of the second messenger molecules diacylglycerol (DAG) and inositol 1,4,5-trisphosphate (IP3) is mediated by calcium-activated phosphatidylinositol-specific phospholipase C enzymes. This Homo sapiens (Human) protein is 1-phosphatidylinositol 4,5-bisphosphate phosphodiesterase eta-1.